The sequence spans 265 residues: Translation initiation factor 2 subunit alpha (265 aa).

In terms of domain architecture, S1 motif spans 12–82 (GELVIGTVKK…KMRVVEVSLK (71 aa)).

Belongs to the eIF-2-alpha family. As to quaternary structure, heterotrimer composed of an alpha, a beta and a gamma chain.

Its function is as follows. eIF-2 functions in the early steps of protein synthesis by forming a ternary complex with GTP and initiator tRNA. This is Translation initiation factor 2 subunit alpha from Pyrobaculum aerophilum (strain ATCC 51768 / DSM 7523 / JCM 9630 / CIP 104966 / NBRC 100827 / IM2).